The following is a 396-amino-acid chain: Probable sugar efflux transporter (396 aa).

Residues 1–14 lie on the Cytoplasmic side of the membrane; sequence MTTNTVSRKVAWLR. A helical membrane pass occupies residues 15–35; it reads VVTLAVAAFIFNTTEFVPVGL. The Periplasmic segment spans residues 36 to 49; sequence LSDIAQSFHMQTAQ. The helical transmembrane segment at 50–70 threads the bilayer; it reads VGIMLTIYAWVVALMSLPFML. At 71 to 80 the chain is on the cytoplasmic side; that stretch reads MTSQVERRKL. The helical transmembrane segment at 81–101 threads the bilayer; it reads LICLFVVFIASHVLSFLSWSF. Position 102 (Thr-102) is a topological domain, periplasmic. A helical transmembrane segment spans residues 103–123; it reads VLVISRIGVAFAHAIFWSITA. The Cytoplasmic portion of the chain corresponds to 124-135; the sequence is SLAIRMAPAGKR. The helical transmembrane segment at 136–156 threads the bilayer; sequence AQALSLIATGTALAMVLGLPL. Residues 157 to 169 are Periplasmic-facing; that stretch reads GRIVGQYFGWRMT. A helical transmembrane segment spans residues 170-190; the sequence is FFAIGIGALITLLCLIKLLPL. At 191–208 the chain is on the cytoplasmic side; that stretch reads LPSEHSGSLKSLPLLFRR. Residues 209-229 form a helical membrane-spanning segment; the sequence is PALMSIYLLTVVVVTAHYTAY. The Periplasmic segment spans residues 230-245; the sequence is SYIEPFVQNIAGFSAN. A helical membrane pass occupies residues 246–266; sequence FATALLLLLGGAGIIGSVIFG. Residues 267-274 are Cytoplasmic-facing; sequence KLGNQYAS. A helical transmembrane segment spans residues 275-295; the sequence is ALVSTAIALLLVCLALLLPAA. The Periplasmic segment spans residues 296–298; that stretch reads NSE. A helical membrane pass occupies residues 299–319; sequence IHLGVLSIFWGIAMMIIGLGM. Residues 320 to 332 are Cytoplasmic-facing; the sequence is QVKVLALAPDATD. The helical transmembrane segment at 333-353 threads the bilayer; it reads VAMALFSGIFNIGIGAGALVG. Over 354–363 the chain is Periplasmic; that stretch reads NQVSLHWSMS. A helical membrane pass occupies residues 364–384; sequence MIGYVGTVPAFAALIWSIIIF. The Cytoplasmic segment spans residues 385-396; the sequence is RRWPVTLEEQTQ.

This sequence belongs to the major facilitator superfamily. SotB (TC 2.A.1.2) family.

The protein localises to the cell inner membrane. In terms of biological role, involved in the efflux of sugars. The physiological role may be the reduction of the intracellular concentration of toxic sugars or sugar metabolites. This chain is Probable sugar efflux transporter, found in Escherichia coli O157:H7.